A 318-amino-acid polypeptide reads, in one-letter code: NADH-ubiquinone oxidoreductase chain 1 (318 aa).

8 helical membrane-spanning segments follow: residues F3–L23, L68–P88, I102–A122, L146–I166, H171–A191, L222–F242, E253–I273, and L294–I314.

Belongs to the complex I subunit 1 family.

It is found in the mitochondrion inner membrane. It carries out the reaction a ubiquinone + NADH + 5 H(+)(in) = a ubiquinol + NAD(+) + 4 H(+)(out). Core subunit of the mitochondrial membrane respiratory chain NADH dehydrogenase (Complex I) that is believed to belong to the minimal assembly required for catalysis. Complex I functions in the transfer of electrons from NADH to the respiratory chain. The immediate electron acceptor for the enzyme is believed to be ubiquinone. This chain is NADH-ubiquinone oxidoreductase chain 1 (MT-ND1), found in Nyctalus plancyi velutinus (Fine-haired noctule).